We begin with the raw amino-acid sequence, 475 residues long: Protein transport protein Sec61 subunit alpha (475 aa).

Over 1–32 the chain is Cytoplasmic; sequence MGFRFLDIVKPFTSLVPEVGQPDRKIPFREKV. Residues 33–53 traverse the membrane as a helical segment; sequence LWTAICLFIFLVCSQIPLYGI. Over 54–75 the chain is Lumenal; the sequence is RSTDSSDPFYWAKVIMASNRGT. A helical membrane pass occupies residues 76–96; that stretch reads LMELGISPIVTSGMVMQLLAG. Residues 97–118 lie on the Cytoplasmic side of the membrane; it reads AKLIEIDQSVKADRDLFSAAQK. A helical transmembrane segment spans residues 119–139; sequence LFGMLICVGQGVAYIWSGSYG. The Lumenal portion of the chain corresponds to 140–145; the sequence is DPAVLG. Residues 146-166 traverse the membrane as a helical segment; sequence FGNCFLIVLQLFFAGIIVMLL. Residues 167-173 lie on the Cytoplasmic side of the membrane; it reads DELLQKG. A helical transmembrane segment spans residues 174–194; it reads YGIGSGISLFIATNICETIVW. Residues 195–241 are Lumenal-facing; that stretch reads KTFSPTTVSVGKGTEFEGAVIALFHLLLTRNDKVRALKEAFYRQNLP. The helical transmembrane segment at 242–262 threads the bilayer; sequence NITNLLATVLIFMVVIYFQGF. The Cytoplasmic segment spans residues 263-289; sequence RVDLPVKSTRVSGQQGTYPIKLFYTSN. A helical membrane pass occupies residues 290 to 310; that stretch reads IPIILQSALVSNLYFISQLLY. Topologically, residues 311 to 353 are lumenal; that stretch reads RRFPDNILVNLFGAWRTSEYSQQMIPVSGLTYYISSPNNMSAV. A helical membrane pass occupies residues 354–374; it reads LADPFHALFYITFMLTSCALF. The Cytoplasmic segment spans residues 375 to 411; it reads SKVWIEVSGSSARDVAKQLKDQQMTMKGHRDTSVIKE. The helical transmembrane segment at 412 to 434 threads the bilayer; that stretch reads LNRYIPTAAAFGGLCIGALTVVA. Over 435-440 the chain is Lumenal; that stretch reads DFMGAI. The helical transmembrane segment at 441 to 461 threads the bilayer; it reads GSGTGILLAVTIIYQYFETFV. The Cytoplasmic segment spans residues 462–475; that stretch reads KEQQELSGGIGGLF.

The protein belongs to the SecY/SEC61-alpha family. As to quaternary structure, heterotrimeric complex composed of SEC61-alpha, SEC61-beta and SEC61-gamma.

The protein localises to the endoplasmic reticulum membrane. Its function is as follows. Appears to play a crucial role in the insertion of secretory and membrane polypeptides into the ER. It is required for assembly of membrane and secretory proteins. Found to be tightly associated with membrane-bound ribosomes, either directly or through adaptor proteins. The chain is Protein transport protein Sec61 subunit alpha (sec61a) from Dictyostelium discoideum (Social amoeba).